The chain runs to 262 residues: MAPLKSLLLGASLATLALSTPLATDAENLYARQFGTGSTANELEQGSCKDVTLIFARGSTELGNMGTVIGPPLCDNLKSKLGSDKVACQGVGGQYSAGLVQNALPQNTDPGSISAAKQMFEEANSKCPNTKIVAGGYSQGSAVIDNAVQELSTTVKDQVKGVVLFGFTRNVQDHGQIPNYPKDDVKVYCAVGDLVCDDTLVVTAMHLTYGMDAGDAASFLAEKVQSSSSSTTSSSSDAASSSSAAGTSSSGLSGLSSFFGGL.

Positions 1-19 are cleaved as a signal peptide; the sequence is MAPLKSLLLGASLATLALS. Intrachain disulfides connect Cys-48–Cys-127 and Cys-74–Cys-88. Residue Ser-138 is the Nucleophile of the active site. Cys-189 and Cys-196 are joined by a disulfide. Asp-193 is a catalytic residue. His-206 acts as the Proton donor/acceptor in catalysis. The disordered stretch occupies residues 228-262; it reads SSSTTSSSSDAASSSSAAGTSSSGLSGLSSFFGGL.

It belongs to the cutinase family.

It localises to the secreted. The enzyme catalyses cutin + H2O = cutin monomers.. Its function is as follows. Catalyzes the hydrolysis of complex carboxylic polyesters found in the cell wall of plants. Degrades cutin, a macromolecule that forms the structure of the plant cuticle. This is Probable cutinase 1 from Aspergillus niger (strain ATCC MYA-4892 / CBS 513.88 / FGSC A1513).